The sequence spans 106 residues: uncharacterized protein (106 aa).

In terms of domain architecture, HTH hxlR-type spans M1–I93.

This is an uncharacterized protein from Methanocaldococcus jannaschii (strain ATCC 43067 / DSM 2661 / JAL-1 / JCM 10045 / NBRC 100440) (Methanococcus jannaschii).